Here is a 487-residue protein sequence, read N- to C-terminus: MKALDELTFDNRFARLGDAFSTHVLPEPLDNPRLVAASPGAMALLDLDPAVAETPVFAELFGGHKLWAEAEPRAMVYSGHQFGSYNPQLGDGRGLLLGEVYNQAGEHWDLHLKGAGQTPYSRMGDGRAVLRSSIREFLASEALHALGIPSSRALCVIGSDTPVWREKQERGAMVLRLAPSHVRFGHFEYFYYTKKPEQQKQLGEHVLALHFPECQELPEPYLAMFREIVERNAELIAKWQAYGFCHGVMNTDNMSILGITFDFGPFAFLDDFDAHFICNHSDDQGRYSFSNQVPIGQWNLSALAQALTPFISVEALRESLGLFLPLYQAHYLDLMRRRLGFTQAEDDDQKLVERLLQLMQNSGVDYSLFFRRLGEHAPEQALARLRDDFVDRNGFDAWAELYRERVARDPIQGQDLRRARMHAVNPLYILRNYLAQKAIDAAEAGDYSEVRRLHQVLSRPFEEQPGMDSYAERPPEWGKHLEISCSS.

Residues G90, G92, R93, K113, D125, G126, R176, and R183 each coordinate ATP. D252 functions as the Proton acceptor in the catalytic mechanism. N253 and D262 together coordinate Mg(2+). ATP is bound at residue D262.

The protein belongs to the SELO family. Mg(2+) serves as cofactor. The cofactor is Mn(2+).

The enzyme catalyses L-seryl-[protein] + ATP = 3-O-(5'-adenylyl)-L-seryl-[protein] + diphosphate. It catalyses the reaction L-threonyl-[protein] + ATP = 3-O-(5'-adenylyl)-L-threonyl-[protein] + diphosphate. It carries out the reaction L-tyrosyl-[protein] + ATP = O-(5'-adenylyl)-L-tyrosyl-[protein] + diphosphate. The catalysed reaction is L-histidyl-[protein] + UTP = N(tele)-(5'-uridylyl)-L-histidyl-[protein] + diphosphate. The enzyme catalyses L-seryl-[protein] + UTP = O-(5'-uridylyl)-L-seryl-[protein] + diphosphate. It catalyses the reaction L-tyrosyl-[protein] + UTP = O-(5'-uridylyl)-L-tyrosyl-[protein] + diphosphate. Its function is as follows. Nucleotidyltransferase involved in the post-translational modification of proteins. It can catalyze the addition of adenosine monophosphate (AMP) or uridine monophosphate (UMP) to a protein, resulting in modifications known as AMPylation and UMPylation. This is Protein nucleotidyltransferase YdiU from Pseudomonas fluorescens (strain ATCC BAA-477 / NRRL B-23932 / Pf-5).